The primary structure comprises 880 residues: Translation initiation factor IF-2 (880 aa).

The interval 1-251 is disordered; it reads MVDTKNPGDK…PTAKPAPAKQ (251 aa). The segment covering 58 to 79 has biased composition (low complexity); it reads PADAPAAPAPVAAAKPAPVRAP. The span at 115-183 shows a compositional bias: basic and acidic residues; that stretch reads ARIRDEEERK…KRFGEEEAKK (69 aa). Low complexity-rich tracts occupy residues 184–215 and 233–250; these read AAAAAPAKTTAATTATAAKPGAPARAPGVAAD and AARPVVAPKPTAKPAPAK. In terms of domain architecture, tr-type G spans 376–547; the sequence is PRSPVVTVMG…ALQAELLDLK (172 aa). The interval 385–392 is G1; it reads GHVDHGKT. 385–392 contributes to the GTP binding site; the sequence is GHVDHGKT. Residues 410–414 are G2; that stretch reads GITQH. Residues 433–436 are G3; that stretch reads DTPG. GTP is bound by residues 433-437 and 487-490; these read DTPGH and NKID. Residues 487–490 form a G4 region; the sequence is NKID. Residues 523-525 are G5; it reads SAK.

Belongs to the TRAFAC class translation factor GTPase superfamily. Classic translation factor GTPase family. IF-2 subfamily.

The protein localises to the cytoplasm. In terms of biological role, one of the essential components for the initiation of protein synthesis. Protects formylmethionyl-tRNA from spontaneous hydrolysis and promotes its binding to the 30S ribosomal subunits. Also involved in the hydrolysis of GTP during the formation of the 70S ribosomal complex. This chain is Translation initiation factor IF-2, found in Rhodopseudomonas palustris (strain BisB18).